A 398-amino-acid polypeptide reads, in one-letter code: Beta-1,4-galactosyltransferase 1 (398 aa).

The Cytoplasmic segment spans residues 1-24 (MRLREPLLSGSAAMPGASLQRACR). The chain crosses the membrane as a helical; Signal-anchor for type II membrane protein span at residues 25–44 (LLVAVCALHLGVTLVYYLAG). Over 45-398 (RDLSRLPQLV…QITVDIGTPS (354 aa)) the chain is Lumenal. Residues 61–76 (QGGSNSAAAIGQSSGE) are compositionally biased toward polar residues. The disordered stretch occupies residues 61–117 (QGGSNSAAAIGQSSGELRTGGARPPPPLGASSQPRPGGDSSPVVDSGPGPASNLTSV). Asn113 is a glycosylation site (N-linked (GlcNAc...) asparagine). Residues Cys130 and Cys172 are joined by a disulfide bond. UDP-alpha-D-galactose is bound by residues 183-187 (PFRNR), 222-224 (FNR), 249-250 (VD), and Trp310. Cys243 and Cys262 are oxidised to a cystine. Asp250 is a Mn(2+) binding site. Residue 312–315 (GEDD) participates in N-acetyl-D-glucosamine binding. His343 is a Mn(2+) binding site. 343-346 (HSRD) serves as a coordination point for UDP-alpha-D-galactose. Residue Arg355 coordinates N-acetyl-D-glucosamine.

This sequence belongs to the glycosyltransferase 7 family. Homodimer; and heterodimer with alpha-lactalbumin to form lactose synthase. Interacts (via N-terminal cytoplasmic domain) with UBE2Q1 (via N-terminus); the interaction is direct. Mn(2+) serves as cofactor. The soluble form derives from the membrane forms by proteolytic processing. In terms of tissue distribution, ubiquitously expressed, but at very low levels in fetal and adult brain.

It localises to the golgi apparatus. The protein resides in the golgi stack membrane. Its subcellular location is the cell membrane. It is found in the cell surface. The protein localises to the cell projection. It localises to the filopodium. The protein resides in the secreted. The enzyme catalyses D-glucose + UDP-alpha-D-galactose = lactose + UDP + H(+). The catalysed reaction is an N-acetyl-beta-D-glucosaminyl derivative + UDP-alpha-D-galactose = a beta-D-galactosyl-(1-&gt;4)-N-acetyl-beta-D-glucosaminyl derivative + UDP + H(+). It catalyses the reaction N-acetyl-D-glucosamine + UDP-alpha-D-galactose = beta-D-galactosyl-(1-&gt;4)-N-acetyl-D-glucosamine + UDP + H(+). It carries out the reaction a beta-D-GlcNAc-(1-&gt;3)-beta-D-Gal-(1-&gt;4)-beta-D-Glc-(1&lt;-&gt;1)-Cer(d18:1(4E)) + UDP-alpha-D-galactose = a neolactoside nLc4Cer(d18:1(4E)) + UDP + H(+). The enzyme catalyses a beta-D-glucosylceramide + UDP-alpha-D-galactose = a beta-D-galactosyl-(1-&gt;4)-beta-D-glucosyl-(1&lt;-&gt;1)-ceramide + UDP + H(+). The catalysed reaction is a neolactoside IV(3)-beta-GlcNAc-nLc4Cer + UDP-alpha-D-galactose = a neolactoside nLc6Cer + UDP + H(+). It functions in the pathway protein modification; protein glycosylation. In terms of biological role, the Golgi complex form catalyzes the production of lactose in the lactating mammary gland and could also be responsible for the synthesis of complex-type N-linked oligosaccharides in many glycoproteins as well as the carbohydrate moieties of glycolipids. The cell surface form functions as a recognition molecule during a variety of cell to cell and cell to matrix interactions, as those occurring during development and egg fertilization, by binding to specific oligosaccharide ligands on opposing cells or in the extracellular matrix. This chain is Beta-1,4-galactosyltransferase 1, found in Homo sapiens (Human).